Consider the following 190-residue polypeptide: Hypoxanthine/guanine phosphoribosyltransferase (190 aa).

It belongs to the purine/pyrimidine phosphoribosyltransferase family. Archaeal HPRT subfamily. As to quaternary structure, homodimer.

The protein localises to the cytoplasm. The enzyme catalyses IMP + diphosphate = hypoxanthine + 5-phospho-alpha-D-ribose 1-diphosphate. It catalyses the reaction GMP + diphosphate = guanine + 5-phospho-alpha-D-ribose 1-diphosphate. Its pathway is purine metabolism; IMP biosynthesis via salvage pathway; IMP from hypoxanthine: step 1/1. In terms of biological role, catalyzes a salvage reaction resulting in the formation of IMP that is energically less costly than de novo synthesis. In Methanohalobium evestigatum (strain ATCC BAA-1072 / DSM 3721 / NBRC 107634 / OCM 161 / Z-7303), this protein is Hypoxanthine/guanine phosphoribosyltransferase.